The following is a 137-amino-acid chain: Large ribosomal subunit protein uL16 (137 aa).

This sequence belongs to the universal ribosomal protein uL16 family. As to quaternary structure, part of the 50S ribosomal subunit.

Binds 23S rRNA and is also seen to make contacts with the A and possibly P site tRNAs. This is Large ribosomal subunit protein uL16 from Nitratidesulfovibrio vulgaris (strain DSM 19637 / Miyazaki F) (Desulfovibrio vulgaris).